The primary structure comprises 131 residues: MDFQQLADVAEKWCSSTPFELIAAEETERRMDFYADPGVSFYVLCPDNGCGDSFHVWSESEDCLPFLQLAQDYISSCGKKTLQEVLEKVFKSFRPLLGLPDADDDAFEEYSADVEEEEPEADHPQMGVSQQ.

Y34 carries the post-translational modification Phosphotyrosine. A compositionally biased stretch (acidic residues) spans 107 to 120; it reads FEEYSADVEEEEPE. The disordered stretch occupies residues 107-131; the sequence is FEEYSADVEEEEPEADHPQMGVSQQ.

It belongs to the MTURN family. Post-translationally, phosphorylation at Tyr-34 is essential for its ability to promote megakaryocyte differentiation.

The protein resides in the cytoplasm. Functionally, promotes megakaryocyte differentiation by enhancing ERK and JNK signaling as well as up-regulating RUNX1 and FLI1 expression. Represses NF-kappa-B transcriptional activity by inhibiting phosphorylation of RELA at 'Ser- 536'. May be involved in early neuronal development. The chain is Maturin (Mturn) from Rattus norvegicus (Rat).